Reading from the N-terminus, the 1888-residue chain is Fatty acid synthase subunit alpha (1888 aa).

The tract at residues 98–118 (DLAPVEEPNAEEQTGAAATPA) is disordered. The 76-residue stretch at 146–221 (VKASLLLHVL…ETFQDTFAGS (76 aa)) folds into the Carrier domain. S181 carries the post-translational modification O-(pantetheine 4'-phosphoryl)serine. Residues 675–874 (DKYVLITGAG…CGAIIGWTRG (200 aa)) are beta-ketoacyl reductase. The Ketosynthase family 3 (KS3) domain maps to 1119–1657 (KQMIQEVVIE…QKGAQAVAVH (539 aa)). Residues C1305, H1542, and H1583 each act as for beta-ketoacyl synthase activity in the active site. The Mg(2+) site is built by D1774, V1775, and E1776. Acetyl-CoA contacts are provided by residues 1774 to 1776 (DVE), Y1800, S1810, 1819 to 1829 (EAVFKSLGVKS), 1843 to 1846 (REAG), and 1873 to 1875 (ISH). S1874 and H1875 together coordinate Mg(2+).

The protein belongs to the thiolase-like superfamily. Fungal fatty acid synthetase subunit alpha family. Fatty acid synthase is composed of alpha and beta subunits.

It carries out the reaction acetyl-CoA + n malonyl-CoA + 2n NADPH + 4n H(+) = a long-chain-acyl-CoA + n CoA + n CO2 + 2n NADP(+).. The catalysed reaction is a fatty acyl-[ACP] + malonyl-[ACP] + H(+) = a 3-oxoacyl-[ACP] + holo-[ACP] + CO2. It catalyses the reaction a (3R)-hydroxyacyl-[ACP] + NADP(+) = a 3-oxoacyl-[ACP] + NADPH + H(+). Functionally, fatty acid synthetase catalyzes the formation of long-chain fatty acids from acetyl-CoA, malonyl-CoA and NADPH. The alpha subunit contains domains for: acyl carrier protein, 3-oxoacyl-[acyl-carrier-protein] reductase, and 3-oxoacyl-[acyl-carrier-protein] synthase. In this species, higher amounts of C18 than C16 fatty acids are produced. This chain is Fatty acid synthase subunit alpha (FAS2), found in Lachancea kluyveri (Yeast).